We begin with the raw amino-acid sequence, 463 residues long: L-seryl-tRNA(Sec) selenium transferase (463 aa).

Lys295 carries the N6-(pyridoxal phosphate)lysine modification.

This sequence belongs to the SelA family. In terms of assembly, homodecamer; pentamer of dimers. Binds only one seryl-tRNA(Sec) per dimer. It depends on pyridoxal 5'-phosphate as a cofactor.

The protein localises to the cytoplasm. It catalyses the reaction L-seryl-tRNA(Sec) + selenophosphate + H(+) = L-selenocysteinyl-tRNA(Sec) + phosphate. Its pathway is aminoacyl-tRNA biosynthesis; selenocysteinyl-tRNA(Sec) biosynthesis; selenocysteinyl-tRNA(Sec) from L-seryl-tRNA(Sec) (bacterial route): step 1/1. Its function is as follows. Converts seryl-tRNA(Sec) to selenocysteinyl-tRNA(Sec) required for selenoprotein biosynthesis. The chain is L-seryl-tRNA(Sec) selenium transferase from Escherichia fergusonii (strain ATCC 35469 / DSM 13698 / CCUG 18766 / IAM 14443 / JCM 21226 / LMG 7866 / NBRC 102419 / NCTC 12128 / CDC 0568-73).